The sequence spans 641 residues: Transcription termination factor MTERF2, chloroplastic (641 aa).

Disordered regions lie at residues 54 to 80 and 606 to 641; these read LKLNKNPNESQETFVPPPPPPRRDLDG and FEAGLDSEDSQPSDENISDQEIAFSDEAEEEEDLTE. A compositionally biased stretch (acidic residues) spans 610-641; that stretch reads LDSEDSQPSDENISDQEIAFSDEAEEEEDLTE.

The protein belongs to the mTERF family.

It is found in the plastid. It localises to the chloroplast. Its function is as follows. Transcription termination factor involved in processing of plastid transcripts. Essential for embryogenesis. The polypeptide is Transcription termination factor MTERF2, chloroplastic (Arabidopsis thaliana (Mouse-ear cress)).